The chain runs to 226 residues: uncharacterized protein (226 aa).

Belongs to the SSM1 family.

This is an uncharacterized protein from Schizosaccharomyces pombe (strain 972 / ATCC 24843) (Fission yeast).